The following is an 807-amino-acid chain: Spondin-1 (807 aa).

The signal sequence occupies residues M1–A28. Positions F29–K194 constitute a Reelin domain. Intrachain disulfides connect C44–C128, C156–C182, C199–C336, C200–C340, C202–C415, C443–C480, C454–C489, C459–C494, C502–C538, C513–C517, C548–C554, C559–C595, C570–C574, C605–C610, C615–C650, C626–C630, and C660–C665. The Spondin domain maps to P195–P388. N214 is a glycosylation site (N-linked (GlcNAc...) asparagine). Ca(2+)-binding residues include D325, D354, and D358. TSP type-1 domains are found at residues T442–S495, T501–S555, S558–H611, P614–P666, D668–L721, and G754–P806. N-linked (GlcNAc...) asparagine glycosylation occurs at N681.

As to quaternary structure, binds to the central extracellular domain of APP and inhibits beta-secretase cleavage of APP.

It localises to the secreted. Its subcellular location is the extracellular space. It is found in the extracellular matrix. Functionally, cell adhesion protein that promotes the attachment of spinal cord and sensory neuron cells and the outgrowth of neurites in vitro. May contribute to the growth and guidance of axons in both the spinal cord and the PNS. Major factor for vascular smooth muscle cell. The sequence is that of Spondin-1 (SPON1) from Bos taurus (Bovine).